A 398-amino-acid polypeptide reads, in one-letter code: Signal-regulatory protein beta-1 (398 aa).

Positions 1–29 are cleaved as a signal peptide; sequence MPVPASWPHLPSPFLLMTLLLGRLTGVAG. Residues 30–136 form the Ig-like V-type domain; it reads EDELQVIQPE…SPDDVEFKSG (107 aa). Residues 30 to 371 lie on the Extracellular side of the membrane; the sequence is EDELQVIQPE…EAALAPTAPL (342 aa). 2 disulfide bridges follow: Cys-54-Cys-120 and Cys-169-Cys-227. Ig-like C1-type domains follow at residues 147 to 246 and 253 to 347; these read PSAP…ANLS and PTLE…YALE. 3 N-linked (GlcNAc...) asparagine glycosylation sites follow: Asn-244, Asn-269, and Asn-291. Residues 372–392 form a helical membrane-spanning segment; it reads LVALLLGPKLLLVVGVSAIYI. Residues 393–398 are Cytoplasmic-facing; the sequence is CWKQKA.

As to quaternary structure, homodimer; disulfide-linked. Interacts with TYROBP. This interaction results in the recruitment of SYK. Post-translationally, N-glycosylated. In terms of tissue distribution, detected in monocytes and dendritic cells.

It is found in the cell membrane. Functionally, immunoglobulin-like cell surface receptor involved in the negative regulation of receptor tyrosine kinase-coupled signaling processes. Also participates in the recruitment of tyrosine kinase SYK. Triggers activation of myeloid cells when associated with TYROBP. The chain is Signal-regulatory protein beta-1 (SIRPB1) from Homo sapiens (Human).